We begin with the raw amino-acid sequence, 483 residues long: Proline--tRNA ligase (483 aa).

It belongs to the class-II aminoacyl-tRNA synthetase family. ProS type 3 subfamily. Homodimer.

It localises to the cytoplasm. The enzyme catalyses tRNA(Pro) + L-proline + ATP = L-prolyl-tRNA(Pro) + AMP + diphosphate. Catalyzes the attachment of proline to tRNA(Pro) in a two-step reaction: proline is first activated by ATP to form Pro-AMP and then transferred to the acceptor end of tRNA(Pro). In Sulfolobus acidocaldarius (strain ATCC 33909 / DSM 639 / JCM 8929 / NBRC 15157 / NCIMB 11770), this protein is Proline--tRNA ligase.